The following is a 718-amino-acid chain: Effector protein hopM1 (718 aa).

Residues Met1–Gly10 show a composition bias toward gly residues. Disordered stretches follow at residues Met1 to Pro63 and Gly683 to Arg718. Residues Ser11–Pro22 are compositionally biased toward polar residues. The segment covering Ala44–Ala60 has biased composition (low complexity).

Interacts with the chaperone ShcM.

It localises to the secreted. The protein resides in the host membrane. In terms of biological role, involved in the suppression of basal resistance and promotion of disease symptoms in plants. May be involved in the inhibition of a host vesicle trafficking pathway. This chain is Effector protein hopM1 (hopM1), found in Pseudomonas syringae pv. syringae (strain B728a).